Here is a 95-residue protein sequence, read N- to C-terminus: MSFRPLHDRVLVRRVEAEEKTAGGIIIPDSAKEKPQEGEVVAVGGGSKAEDGKVTPLDVKAGDKILFGKWSGTEVKINGEDLLIMKESDILGIVG.

This sequence belongs to the GroES chaperonin family. Heptamer of 7 subunits arranged in a ring. Interacts with the chaperonin GroEL.

It is found in the cytoplasm. In terms of biological role, together with the chaperonin GroEL, plays an essential role in assisting protein folding. The GroEL-GroES system forms a nano-cage that allows encapsulation of the non-native substrate proteins and provides a physical environment optimized to promote and accelerate protein folding. GroES binds to the apical surface of the GroEL ring, thereby capping the opening of the GroEL channel. The chain is Co-chaperonin GroES from Rhizorhabdus wittichii (strain DSM 6014 / CCUG 31198 / JCM 15750 / NBRC 105917 / EY 4224 / RW1) (Sphingomonas wittichii).